A 501-amino-acid polypeptide reads, in one-letter code: Glycerol kinase (501 aa).

Residue threonine 12 participates in ADP binding. Positions 12, 13, and 14 each coordinate ATP. Threonine 12 lines the sn-glycerol 3-phosphate pocket. Arginine 16 contacts ADP. The sn-glycerol 3-phosphate site is built by arginine 82, glutamate 83, tyrosine 134, and aspartate 244. The glycerol site is built by arginine 82, glutamate 83, tyrosine 134, aspartate 244, and glutamine 245. The ADP site is built by threonine 266 and glycine 310. ATP contacts are provided by threonine 266, glycine 310, glutamine 314, and glycine 411. ADP-binding residues include glycine 411 and asparagine 415.

The protein belongs to the FGGY kinase family.

It carries out the reaction glycerol + ATP = sn-glycerol 3-phosphate + ADP + H(+). It participates in polyol metabolism; glycerol degradation via glycerol kinase pathway; sn-glycerol 3-phosphate from glycerol: step 1/1. Its activity is regulated as follows. Inhibited by fructose 1,6-bisphosphate (FBP). Functionally, key enzyme in the regulation of glycerol uptake and metabolism. Catalyzes the phosphorylation of glycerol to yield sn-glycerol 3-phosphate. In Methylorubrum populi (strain ATCC BAA-705 / NCIMB 13946 / BJ001) (Methylobacterium populi), this protein is Glycerol kinase.